A 591-amino-acid chain; its full sequence is Cytidine monophosphate-N-acetylneuraminic acid hydroxylase (591 aa).

One can recognise a Rieske domain in the interval 16–114; it reads LASAEVESLK…IENDDENGVS (99 aa). The [2Fe-2S] cluster site is built by C56, H58, C77, and H80.

The protein belongs to the CMP-Neu5Ac hydroxylase family. It depends on [2Fe-2S] cluster as a cofactor.

The protein localises to the cytoplasm. It carries out the reaction CMP-N-acetyl-beta-neuraminate + 2 Fe(II)-[cytochrome b5] + O2 + 2 H(+) = CMP-N-glycoloyl-beta-neuraminate + 2 Fe(III)-[cytochrome b5] + H2O. The protein operates within amino-sugar metabolism; N-acetylneuraminate metabolism. Sialic acids are components of carbohydrate chains of glycoconjugates and are involved in cell-cell recognition and cell-pathogen interactions. Catalyzes the conversion of CMP-N-acetylneuraminic acid (CMP-Neu5Ac) into its hydroxylated derivative CMP-N-glycolylneuraminic acid (CMP-Neu5Gc), a sialic acid abundantly expressed at the surface of many cells. In Xenopus laevis (African clawed frog), this protein is Cytidine monophosphate-N-acetylneuraminic acid hydroxylase (cmah).